Reading from the N-terminus, the 135-residue chain is Large-conductance mechanosensitive channel (135 aa).

The next 2 helical transmembrane spans lie at 10–30 (FAMK…AAFG) and 76–96 (GAFI…FCAI).

The protein belongs to the MscL family. As to quaternary structure, homopentamer.

The protein resides in the cell inner membrane. Functionally, channel that opens in response to stretch forces in the membrane lipid bilayer. May participate in the regulation of osmotic pressure changes within the cell. This Proteus mirabilis (strain HI4320) protein is Large-conductance mechanosensitive channel.